The sequence spans 139 residues: Ribosome-binding factor A (139 aa).

A disordered region spans residues proline 120–glutamate 139. Residues aspartate 128–glutamate 139 show a composition bias toward acidic residues.

The protein belongs to the RbfA family. Monomer. Binds 30S ribosomal subunits, but not 50S ribosomal subunits or 70S ribosomes.

The protein localises to the cytoplasm. Its function is as follows. One of several proteins that assist in the late maturation steps of the functional core of the 30S ribosomal subunit. Associates with free 30S ribosomal subunits (but not with 30S subunits that are part of 70S ribosomes or polysomes). Required for efficient processing of 16S rRNA. May interact with the 5'-terminal helix region of 16S rRNA. The protein is Ribosome-binding factor A of Nostoc punctiforme (strain ATCC 29133 / PCC 73102).